Reading from the N-terminus, the 379-residue chain is 1-deoxy-D-xylulose 5-phosphate reductoisomerase (379 aa).

The NADPH site is built by Thr10, Gly11, Ser12, Ile13, Asn39, and Asn121. 1-deoxy-D-xylulose 5-phosphate is bound at residue Lys122. Residue Glu123 participates in NADPH binding. Residue Asp147 participates in Mn(2+) binding. Positions 148, 149, 173, and 196 each coordinate 1-deoxy-D-xylulose 5-phosphate. Glu149 is a Mn(2+) binding site. NADPH is bound at residue Gly202. Residues Ser209, Asn214, Lys215, and Glu218 each coordinate 1-deoxy-D-xylulose 5-phosphate. Position 218 (Glu218) interacts with Mn(2+).

This sequence belongs to the DXR family. Requires Mg(2+) as cofactor. Mn(2+) serves as cofactor.

It carries out the reaction 2-C-methyl-D-erythritol 4-phosphate + NADP(+) = 1-deoxy-D-xylulose 5-phosphate + NADPH + H(+). The protein operates within isoprenoid biosynthesis; isopentenyl diphosphate biosynthesis via DXP pathway; isopentenyl diphosphate from 1-deoxy-D-xylulose 5-phosphate: step 1/6. In terms of biological role, catalyzes the NADPH-dependent rearrangement and reduction of 1-deoxy-D-xylulose-5-phosphate (DXP) to 2-C-methyl-D-erythritol 4-phosphate (MEP). The protein is 1-deoxy-D-xylulose 5-phosphate reductoisomerase of Chlamydia caviae (strain ATCC VR-813 / DSM 19441 / 03DC25 / GPIC) (Chlamydophila caviae).